The sequence spans 60 residues: L-amino-acid oxidase (60 aa).

1-4 (GPMR) serves as a coordination point for FAD. Arg4 is a substrate binding site.

Belongs to the flavin monoamine oxidase family. FIG1 subfamily. Homodimer; non-covalently linked. The cofactor is FAD. Contains 2 disulfide bonds. In terms of processing, N-glycosylated. In terms of tissue distribution, expressed by the venom gland.

It is found in the secreted. The catalysed reaction is an L-alpha-amino acid + O2 + H2O = a 2-oxocarboxylate + H2O2 + NH4(+). Catalyzes an oxidative deamination of predominantly hydrophobic and aromatic L-amino acids, thus producing hydrogen peroxide that may contribute to the diverse toxic effects of this enzyme. Exhibits diverse biological activities, such as hemorrhage, hemolysis, edema, apoptosis of vascular endothelial cells or tumor cell lines, antibacterial and antiparasitic activities, as well as regulation of platelet aggregation. Effects of snake L-amino oxidases on platelets are controversial, since they either induce aggregation or inhibit agonist-induced aggregation. These different effects are probably due to different experimental conditions. The chain is L-amino-acid oxidase from Bitis gabonica (Gaboon adder).